Reading from the N-terminus, the 114-residue chain is DNA-directed RNA polymerase subunit omega (114 aa).

Belongs to the RNA polymerase subunit omega family. The RNAP catalytic core consists of 2 alpha, 1 beta, 1 beta' and 1 omega subunit. When a sigma factor is associated with the core the holoenzyme is formed, which can initiate transcription.

It carries out the reaction RNA(n) + a ribonucleoside 5'-triphosphate = RNA(n+1) + diphosphate. Promotes RNA polymerase assembly. Latches the N- and C-terminal regions of the beta' subunit thereby facilitating its interaction with the beta and alpha subunits. This is DNA-directed RNA polymerase subunit omega from Novosphingobium aromaticivorans (strain ATCC 700278 / DSM 12444 / CCUG 56034 / CIP 105152 / NBRC 16084 / F199).